Reading from the N-terminus, the 883-residue chain is Putative GTP diphosphokinase RSH1, chloroplastic (883 aa).

Residues 1–55 constitute a chloroplast transit peptide; it reads MTSASSMSVSVECVNICNLTKGDGNARSDCSALSCAWKAPRALTGFLASTAHPPV. The region spanning 172-279 is the HD domain; the sequence is FIIHPVAVAR…VKLADRLHNM (108 aa). A TGS domain is found at 562-625; it reads LGSRVFVFTP…ENAEVVEIVT (64 aa). The span at 710–726 shows a compositional bias: polar residues; the sequence is QSQDKSRDTTPAPQNGS. A disordered region spans residues 710 to 746; sequence QSQDKSRDTTPAPQNGSVWAPKVNGKHNKAIKNSSSD. The ACT domain occupies 796–867; the sequence is WLCVVSMDRK…LVLGVLGWSS (72 aa).

It belongs to the RelA/SpoT family. In terms of assembly, interacts with RPP5.

The protein resides in the plastid. It localises to the chloroplast. The enzyme catalyses GTP + ATP = guanosine 3'-diphosphate 5'-triphosphate + AMP. Functionally, may be involved in a rapid plant ppGpp (guanosine 3'-diphosphate 5'-diphosphate)-mediated response to pathogens and other stresses. The sequence is that of Putative GTP diphosphokinase RSH1, chloroplastic (RSH1) from Arabidopsis thaliana (Mouse-ear cress).